A 256-amino-acid polypeptide reads, in one-letter code: DNA repair protein RecO (256 aa).

The protein belongs to the RecO family.

Functionally, involved in DNA repair and RecF pathway recombination. In Bartonella henselae (strain ATCC 49882 / DSM 28221 / CCUG 30454 / Houston 1) (Rochalimaea henselae), this protein is DNA repair protein RecO.